A 156-amino-acid chain; its full sequence is Small ribosomal subunit protein uS7 (156 aa).

It belongs to the universal ribosomal protein uS7 family. Part of the 30S ribosomal subunit. Contacts proteins S9 and S11.

Its function is as follows. One of the primary rRNA binding proteins, it binds directly to 16S rRNA where it nucleates assembly of the head domain of the 30S subunit. Is located at the subunit interface close to the decoding center, probably blocks exit of the E-site tRNA. The protein is Small ribosomal subunit protein uS7 of Streptococcus pyogenes serotype M3 (strain ATCC BAA-595 / MGAS315).